Consider the following 879-residue polypeptide: Alanine--tRNA ligase (879 aa).

Zn(2+) is bound by residues His566, His570, Cys668, and His672.

It belongs to the class-II aminoacyl-tRNA synthetase family. Zn(2+) serves as cofactor.

The protein localises to the cytoplasm. The enzyme catalyses tRNA(Ala) + L-alanine + ATP = L-alanyl-tRNA(Ala) + AMP + diphosphate. Its function is as follows. Catalyzes the attachment of alanine to tRNA(Ala) in a two-step reaction: alanine is first activated by ATP to form Ala-AMP and then transferred to the acceptor end of tRNA(Ala). Also edits incorrectly charged Ser-tRNA(Ala) and Gly-tRNA(Ala) via its editing domain. This chain is Alanine--tRNA ligase, found in Clostridium kluyveri (strain ATCC 8527 / DSM 555 / NBRC 12016 / NCIMB 10680 / K1).